A 252-amino-acid polypeptide reads, in one-letter code: PF03932 family protein CutC (252 aa).

This sequence belongs to the CutC family.

Its subcellular location is the cytoplasm. The protein is PF03932 family protein CutC of Pectobacterium atrosepticum (strain SCRI 1043 / ATCC BAA-672) (Erwinia carotovora subsp. atroseptica).